A 493-amino-acid polypeptide reads, in one-letter code: Phospholipid transfer protein (493 aa).

A signal peptide spans 1–17 (MVLLWALFLALLAGAHA). N-linked (GlcNAc...) asparagine glycosylation is found at asparagine 64, asparagine 91, asparagine 94, asparagine 117, and asparagine 143. Cysteine 146 and cysteine 185 form a disulfide bridge. Residues asparagine 245 and asparagine 398 are each glycosylated (N-linked (GlcNAc...) asparagine).

This sequence belongs to the BPI/LBP/Plunc superfamily. BPI/LBP family. Post-translationally, glycosylation is necessary for secretion and its phospholipid transfer activity. Highest level expression in the lung, brain and heart with relatively low levels in the liver, skeletal muscle and testis and very low levels found in the spleen and kidney.

The protein resides in the secreted. It localises to the nucleus. The catalysed reaction is a 1,2-diacyl-sn-glycero-3-phosphocholine(in) = a 1,2-diacyl-sn-glycero-3-phosphocholine(out). It carries out the reaction a 1,2-diacyl-sn-glycero-3-phosphoethanolamine(in) = a 1,2-diacyl-sn-glycero-3-phosphoethanolamine(out). It catalyses the reaction a 1,2-diacyl-sn-glycerol(in) = a 1,2-diacyl-sn-glycerol(out). The enzyme catalyses a 1,2-diacyl-sn-glycero-3-phosphate(in) = a 1,2-diacyl-sn-glycero-3-phosphate(out). The catalysed reaction is a sphingomyelin(in) = a sphingomyelin(out). It carries out the reaction a 1,2-diacyl-sn-glycero-3-phospho-(1'-sn-glycerol)(in) = a 1,2-diacyl-sn-glycero-3-phospho-(1'-sn-glycerol)(out). It catalyses the reaction a 1,2-diacyl-sn-glycero-3-phospho-(1D-myo-inositol)(in) = a 1,2-diacyl-sn-glycero-3-phospho-(1D-myo-inositol)(out). The enzyme catalyses 1-hexadecanoyl-2-(5Z,8Z,11Z,14Z-eicosatetraenoyl)-sn-glycero-3-phosphoethanolamine(in) = 1-hexadecanoyl-2-(5Z,8Z,11Z,14Z-eicosatetraenoyl)-sn-glycero-3-phosphoethanolamine(out). The catalysed reaction is N-(hexadecanoyl)-sphing-4-enine-1-phosphocholine(in) = N-(hexadecanoyl)-sphing-4-enine-1-phosphocholine(out). It carries out the reaction 1,2-dihexadecanoyl-sn-glycero-3-phosphocholine(in) = 1,2-dihexadecanoyl-sn-glycero-3-phosphocholine(out). Its function is as follows. Mediates the transfer of phospholipids and free cholesterol from triglyceride-rich lipoproteins (low density lipoproteins or LDL and very low density lipoproteins or VLDL) into high-density lipoproteins (HDL) as well as the exchange of phospholipids between triglyceride-rich lipoproteins themselves. Facilitates the transfer of a spectrum of different lipid molecules, including sphingomyelin, phosphatidylcholine, phosphatidylinositol, phosphatidylglycerol, and phosphatidyl ethanolamine. Plays an important role in HDL remodeling which involves modulating the size and composition of HDL. Also plays a key role in the uptake of cholesterol from peripheral cells and tissues that is subsequently transported to the liver for degradation and excretion. Two distinct forms of PLTP exist in plasma: an active form that can transfer phosphatidylcholine from phospholipid vesicles to HDL, and an inactive form that lacks this capability. This chain is Phospholipid transfer protein (Pltp), found in Mus musculus (Mouse).